Reading from the N-terminus, the 444-residue chain is MSEMTPREIVSELDKHIIGQDAAKRSVSIALRNRWRRMQLNEELRHEVTPKNILMIGPTGVGKTEIARRLAKLANAPFIKVEATKFTEVGYVGKEVDSIIRDLTDAAIKMVRMQSIDKNRYRAEEMAEERILDVLIPPAKNNWGQAEQPQEPSAARQAFRKKLREGQLDDKEIEIDLAAAPMGVEIMSPPGMEEMTSQLQSMFQNLGGQKQKPRKLKIKDAMKLLIEEEAAKLVNPEELKQEAIDAVEQHGIVFIDEIDKICKRGGNASGPDVSREGVQRDLLPLVEGCTVSTKHGMVKTDHILFIASGAFQVASPSDLIPELQGRLPIRVELKALTTHDFERILTEPNASITVQYKALMATEGVNIEFTEDGIKRIAQAAWQVNETTENIGARRLHTVLERLVEDISYDASEMNGQTVTIDAEYVSKHLDVLVADEDLSRFIL.

ATP contacts are provided by residues isoleucine 18, 60–65 (GVGKTE), aspartate 256, glutamate 322, and arginine 394.

The protein belongs to the ClpX chaperone family. HslU subfamily. In terms of assembly, a double ring-shaped homohexamer of HslV is capped on each side by a ring-shaped HslU homohexamer. The assembly of the HslU/HslV complex is dependent on binding of ATP.

It is found in the cytoplasm. In terms of biological role, ATPase subunit of a proteasome-like degradation complex; this subunit has chaperone activity. The binding of ATP and its subsequent hydrolysis by HslU are essential for unfolding of protein substrates subsequently hydrolyzed by HslV. HslU recognizes the N-terminal part of its protein substrates and unfolds these before they are guided to HslV for hydrolysis. This Klebsiella pneumoniae subsp. pneumoniae (strain ATCC 700721 / MGH 78578) protein is ATP-dependent protease ATPase subunit HslU.